A 246-amino-acid chain; its full sequence is DNA polymerase sliding clamp 3 (246 aa).

It belongs to the PCNA family. As to quaternary structure, the subunits circularize to form a toroid; DNA passes through its center. Replication factor C (RFC) is required to load the toroid on the DNA. Forms dimeric complexes with PCNA1 and PCNA2, and trimeric complexes with PCNA123 and PCNA323; does not form homotrimers. Crystal structures show a heterotetramer of 2 PCNA2 and 2 PCNA3, which would be large enough to clamp a Holliday junction.

Functionally, sliding clamp subunit that acts as a moving platform for DNA processing. Responsible for tethering the catalytic subunit of DNA polymerase and other proteins to DNA during high-speed replication. Both trimeric complexes inhibit DNA ligase and both 3'-5' and 5'-3' activity of Hel308 (Hjm) helicase, but stimulate Hjc, the Holliday junction cleavage enzyme. The chain is DNA polymerase sliding clamp 3 from Sulfurisphaera tokodaii (strain DSM 16993 / JCM 10545 / NBRC 100140 / 7) (Sulfolobus tokodaii).